We begin with the raw amino-acid sequence, 594 residues long: CRISPR-associated DNA-binding protein Cas12m (594 aa).

The tract at residues M1–E85 is recognition domain (REC1-N). Residues S86–K153 form a recognition domain (REC2) region. A recognition domain (REC1-C) region spans residues Q154–G211. Residues K212–I314 are wedge domain (WED). The interval L315–T329 is linker. The interval A330–P540 is ruvC-I. Residues A541–D575 form a target nucleic-acid binding (TNB) region. 4 residues coordinate Zn(2+): C548, C551, C567, and C570. The ruvC-II stretch occupies residues Q576–K594. D577 contacts Mg(2+).

Belongs to the CRISPR-associated DNA-binding protein Cas12m family. Mg(2+) serves as cofactor. The cofactor is Zn(2+).

CRISPR (clustered regularly interspaced short palindromic repeat), is an adaptive immune system that provides protection against mobile genetic elements (viruses, transposable elements and conjugative plasmids). CRISPR clusters contain sequences complementary to antecedent mobile elements and target invading nucleic acids. CRISPR clusters are transcribed and processed into CRISPR RNA (crRNA). Recognizes a short motif in the CRISPR repeat sequences (the 5' PAM or protospacer adjacent motif, 5'-C/TCN-3' in this organism) to help distinguish self versus nonself, as targets within the bacterial CRISPR locus do not have PAMs. Upon expression in E.coli as a CRISPR locus inhibits plasmid propagation when targeted to regions essential for plasmid propagation (replication origin but not a selectable marker), probably by inhibiting transcription. Cas12m-crRNA binds DNA in a PAM-dependent, crRNA-guided fashion. Upon expression in E.coli as a CRISPR region preferentially binds to its associated crRNA. Probably required for pre-crRNA processing to mature crRNA. The chain is CRISPR-associated DNA-binding protein Cas12m from Thermanaerosceptrum fracticalcis.